Here is a 126-residue protein sequence, read N- to C-terminus: Small ribosomal subunit protein bS6 (126 aa).

It belongs to the bacterial ribosomal protein bS6 family.

Functionally, binds together with bS18 to 16S ribosomal RNA. The sequence is that of Small ribosomal subunit protein bS6 from Actinobacillus succinogenes (strain ATCC 55618 / DSM 22257 / CCUG 43843 / 130Z).